Here is a 421-residue protein sequence, read N- to C-terminus: Tol-Pal system protein TolB (421 aa).

Positions 1–16 (MRILVFLWLGLSSLFA) are cleaved as a signal peptide.

The protein belongs to the TolB family. As to quaternary structure, the Tol-Pal system is composed of five core proteins: the inner membrane proteins TolA, TolQ and TolR, the periplasmic protein TolB and the outer membrane protein Pal. They form a network linking the inner and outer membranes and the peptidoglycan layer.

Its subcellular location is the periplasm. Part of the Tol-Pal system, which plays a role in outer membrane invagination during cell division and is important for maintaining outer membrane integrity. In Wolinella succinogenes (strain ATCC 29543 / DSM 1740 / CCUG 13145 / JCM 31913 / LMG 7466 / NCTC 11488 / FDC 602W) (Vibrio succinogenes), this protein is Tol-Pal system protein TolB.